Reading from the N-terminus, the 417-residue chain is Phosphoglycerate kinase 2 (417 aa).

Residue S2 is modified to N-acetylserine. 2 positions are modified to phosphoserine: S2 and S4. K11 is subject to N6-acetyllysine. (2R)-3-phosphoglycerate contacts are provided by V23, D24, F25, N26, Q38, and R39. N6-acetyllysine is present on K48. (2R)-3-phosphoglycerate-binding residues include S62, H63, G65, and R66. Residues K75, K86, and K97 each carry the N6-acetyllysine modification. (2R)-3-phosphoglycerate contacts are provided by L122 and R123. 2 positions are modified to N6-acetyllysine: K131 and K146. Residues H170 and R171 each coordinate (2R)-3-phosphoglycerate. A Phosphotyrosine modification is found at Y196. An N6-acetyllysine modification is found at K199. G214 serves as a coordination point for ADP. G214 serves as a coordination point for CDP. Residues A215 and K216 each contribute to the AMP site. Residue A215 coordinates ATP. A215 provides a ligand contact to Mg(2+). Positions 218 and 219 each coordinate Mg(2+). Residue D219 coordinates CDP. An AMP-binding site is contributed by K220. ATP is bound at residue K220. Residue G238 coordinates ADP. A CDP-binding site is contributed by G238. Position 239 (G239) interacts with AMP. G239 is a binding site for ATP. An N6-acetyllysine mark is found at K267 and K291. Residue G313 participates in AMP binding. ATP is bound at residue G313. Residues G338 and F343 each coordinate CDP. Position 343 (F343) interacts with ADP. Residue E344 participates in AMP binding. Residues E344, D375, and T376 each contribute to the ATP site. D375 is a Mg(2+) binding site.

Belongs to the phosphoglycerate kinase family. As to quaternary structure, monomer. Requires Mg(2+) as cofactor.

The protein resides in the cytoplasm. It catalyses the reaction (2R)-3-phosphoglycerate + ATP = (2R)-3-phospho-glyceroyl phosphate + ADP. The protein operates within carbohydrate degradation; glycolysis; pyruvate from D-glyceraldehyde 3-phosphate: step 2/5. Essential for sperm motility and male fertility but is not required for the completion of spermatogenesis. The sequence is that of Phosphoglycerate kinase 2 (PGK2) from Macaca fascicularis (Crab-eating macaque).